Here is a 540-residue protein sequence, read N- to C-terminus: Isocitrate lyase (540 aa).

103-105 provides a ligand contact to substrate; that stretch reads SGW. Asp-187 provides a ligand contact to Mg(2+). Cys-225 functions as the Proton acceptor in the catalytic mechanism. Residues 226–227, 385–389, and Thr-458 contribute to the substrate site; these read GH and NNSPS.

This sequence belongs to the isocitrate lyase/PEP mutase superfamily. Isocitrate lyase family. As to quaternary structure, homotetramer. It depends on Mg(2+) as a cofactor.

It carries out the reaction D-threo-isocitrate = glyoxylate + succinate. It participates in carbohydrate metabolism; glyoxylate cycle; (S)-malate from isocitrate: step 1/2. The protein operates within one-carbon metabolism; formaldehyde assimilation via serine pathway. In the presence of magnesium, inhibited by oxalate, potassium cyanide, manganese, silver, cadmium and to a lesser extent by succinate, glycolate, iodoacetamide, DL-penicillamine, aluminum, sodium, potassium, lithium and strontium. In terms of biological role, involved in the metabolic adaptation in response to environmental changes. Catalyzes the reversible formation of succinate and glyoxylate from isocitrate, a key step of the glyoxylate cycle, which operates as an anaplerotic route for replenishing the tricarboxylic acid cycle during growth on fatty acid substrates. May be involved in the assimilation of one-carbon compounds via the isocitrate lyase-positive serine pathway. The protein is Isocitrate lyase of Hyphomicrobium methylovorum.